The following is a 455-amino-acid chain: Phosphoglucosamine mutase (455 aa).

Serine 102 serves as the catalytic Phosphoserine intermediate. Mg(2+)-binding residues include serine 102, aspartate 241, aspartate 243, and aspartate 245. The residue at position 102 (serine 102) is a Phosphoserine.

The protein belongs to the phosphohexose mutase family. Requires Mg(2+) as cofactor. In terms of processing, activated by phosphorylation.

The catalysed reaction is alpha-D-glucosamine 1-phosphate = D-glucosamine 6-phosphate. Its function is as follows. Catalyzes the conversion of glucosamine-6-phosphate to glucosamine-1-phosphate. The polypeptide is Phosphoglucosamine mutase (Legionella pneumophila (strain Paris)).